The primary structure comprises 436 residues: 3-ketoacyl-CoA thiolase (436 aa).

Residue Cys-99 is the Acyl-thioester intermediate of the active site. Residues His-392 and Cys-422 each act as proton acceptor in the active site.

This sequence belongs to the thiolase-like superfamily. Thiolase family. In terms of assembly, heterotetramer of two alpha chains (FadJ) and two beta chains (FadI).

It localises to the cytoplasm. The catalysed reaction is an acyl-CoA + acetyl-CoA = a 3-oxoacyl-CoA + CoA. It participates in lipid metabolism; fatty acid beta-oxidation. Functionally, catalyzes the final step of fatty acid oxidation in which acetyl-CoA is released and the CoA ester of a fatty acid two carbons shorter is formed. The sequence is that of 3-ketoacyl-CoA thiolase from Cronobacter sakazakii (strain ATCC BAA-894) (Enterobacter sakazakii).